The following is a 703-amino-acid chain: Ion-translocating oxidoreductase complex subunit C (703 aa).

4Fe-4S ferredoxin-type domains are found at residues Y369–Y398 and K408–F437. The [4Fe-4S] cluster site is built by C378, C381, C384, C388, C417, C420, C423, and C427. 2 disordered regions span residues R467–S542 and R555–A680. Positions A485–D497 are enriched in basic and acidic residues. Residues N559–A577 show a composition bias toward low complexity. Residues D578–A592 show a composition bias toward polar residues. Composition is skewed to low complexity over residues A598–T629 and A641–A669.

This sequence belongs to the 4Fe4S bacterial-type ferredoxin family. RnfC subfamily. The complex is composed of six subunits: RnfA, RnfB, RnfC, RnfD, RnfE and RnfG. Requires [4Fe-4S] cluster as cofactor.

It localises to the cell inner membrane. In terms of biological role, part of a membrane-bound complex that couples electron transfer with translocation of ions across the membrane. In Actinobacillus succinogenes (strain ATCC 55618 / DSM 22257 / CCUG 43843 / 130Z), this protein is Ion-translocating oxidoreductase complex subunit C.